Here is a 49-residue protein sequence, read N- to C-terminus: Large ribosomal subunit protein bL34 (49 aa).

This sequence belongs to the bacterial ribosomal protein bL34 family.

The polypeptide is Large ribosomal subunit protein bL34 (Sorangium cellulosum (strain So ce56) (Polyangium cellulosum (strain So ce56))).